A 579-amino-acid chain; its full sequence is Fatty-acid amide hydrolase 1 (579 aa).

Residues 9 to 29 (ALPGASGVALACCFVAAAVAL) form a helical membrane-spanning segment. At 30 to 403 (RWSGRRTARG…GDFVDPCLGD (374 aa)) the chain is on the cytoplasmic side. K142 functions as the Charge relay system in the catalytic mechanism. Substrate-binding positions include M191, S217, and 238-241 (IGGS). Catalysis depends on S217, which acts as the Charge relay system. S241 (acyl-ester intermediate) is an active-site residue. S241 is subject to Phosphoserine. The stretch at 404–433 (LVSILKLPQWLKGLLAFLVKPLLPRLSAFL) is an intramembrane region. Over 434 to 579 (SNMKSRSAGK…RLMTPEKQSS (146 aa)) the chain is Cytoplasmic.

This sequence belongs to the amidase family. In terms of assembly, homodimer. In terms of tissue distribution, highly expressed in the brain, small intestine, pancreas, skeletal muscle and testis. Also expressed in the kidney, liver, lung, placenta and prostate.

Its subcellular location is the endomembrane system. It localises to the cytoplasm. The protein resides in the cytoskeleton. The enzyme catalyses N-(5Z,8Z,11Z,14Z-eicosatetraenoyl)-ethanolamine + H2O = ethanolamine + (5Z,8Z,11Z,14Z)-eicosatetraenoate. It catalyses the reaction (9Z)-octadecenamide + H2O = (9Z)-octadecenoate + NH4(+). It carries out the reaction 2-(5Z,8Z,11Z,14Z-eicosatetraenoyl)-glycerol + H2O = glycerol + (5Z,8Z,11Z,14Z)-eicosatetraenoate + H(+). The catalysed reaction is N-(9Z-octadecenoyl) ethanolamine + H2O = ethanolamine + (9Z)-octadecenoate. The enzyme catalyses N-hexadecanoylethanolamine + H2O = ethanolamine + hexadecanoate. It catalyses the reaction hexadecanamide + H2O = hexadecanoate + NH4(+). It carries out the reaction tetradecamide + H2O = tetradecanoate + NH4(+). The catalysed reaction is N-(9Z-octadecenoyl)-taurine + H2O = taurine + (9Z)-octadecenoate. The enzyme catalyses (9Z,12Z,15Z)-octadecatrienamide + H2O = (9Z,12Z,15Z)-octadecatrienoate + NH4(+). It catalyses the reaction (5Z,8Z,11Z,14Z)-eicosatetraenamide + H2O = (5Z,8Z,11Z,14Z)-eicosatetraenoate + NH4(+). It carries out the reaction (6Z)-octadecenamide + H2O = (6Z)-octadecenoate + NH4(+). The catalysed reaction is (15Z)-tetracosenamide + H2O = (15Z)-tetracosenoate + NH4(+). The enzyme catalyses (8Z,11Z,14Z)-eicosatrienamide + H2O = (8Z,11Z,14Z)-eicosatrienoate + NH4(+). It catalyses the reaction (11Z,14Z,17Z)-eicosatrienamide + H2O = (11Z,14Z,17Z)-eicosatrienoate + NH4(+). It carries out the reaction (11Z,14Z)-eicosadienamide + H2O = (11Z,14Z)-eicosadienoate + NH4(+). The catalysed reaction is (9Z,12Z)-octadecadienamide + H2O = (9Z,12Z)-octadecadienoate + NH4(+). The enzyme catalyses 1-O-methyl-(5Z,8Z,11Z,14Z)-eicosatetraenoate + H2O = methanol + (5Z,8Z,11Z,14Z)-eicosatetraenoate + H(+). It catalyses the reaction (11Z)-eicosenamide + H2O = (11Z)-eicosenoate + NH4(+). It carries out the reaction N-(9Z-hexadecenoyl) ethanolamine + H2O = (9Z)-hexadecenoate + ethanolamine. The catalysed reaction is N-octadecanoyl ethanolamine + H2O = octadecanoate + ethanolamine. The enzyme catalyses N-docosanoyl-ethanolamine + H2O = docosanoate + ethanolamine. It catalyses the reaction N-tetracosanoyl-taurine + H2O = tetracosanoate + taurine. It carries out the reaction N-(15Z-tetracosenoyl)-ethanolamine + H2O = (15Z)-tetracosenoate + ethanolamine. The catalysed reaction is N-docosanoyl-taurine + H2O = docosanoate + taurine. The enzyme catalyses N-(15Z-tetracosenoyl)-taurine + H2O = (15Z)-tetracosenoate + taurine. It catalyses the reaction N-tricosanoyl-taurine + H2O = tricosanoate + taurine. It carries out the reaction (9Z)-octadecenoate + glycine = N-(9Z-octadecenoyl)glycine + H2O. The catalysed reaction is N-(5Z,8Z,11Z,14Z)-eicosatetraenoyl-glycine + H2O = (5Z,8Z,11Z,14Z)-eicosatetraenoate + glycine. The enzyme catalyses N-(5Z,8Z,11Z,14Z-eicosatetraenoyl)-L-serine + H2O = (5Z,8Z,11Z,14Z)-eicosatetraenoate + L-serine. Its activity is regulated as follows. Inhibited by O-aryl carbamates and alpha-keto heterocycles. Inhibited by trifluoromethyl ketone. Catalyzes the hydrolysis of endogenous amidated lipids like the sleep-inducing lipid oleamide ((9Z)-octadecenamide), the endocannabinoid anandamide (N-(5Z,8Z,11Z,14Z-eicosatetraenoyl)-ethanolamine), as well as other fatty amides, to their corresponding fatty acids, thereby regulating the signaling functions of these molecules. Hydrolyzes polyunsaturated substrate anandamide preferentially as compared to monounsaturated substrates. It can also catalyze the hydrolysis of the endocannabinoid 2-arachidonoylglycerol (2-(5Z,8Z,11Z,14Z-eicosatetraenoyl)-glycerol). FAAH cooperates with PM20D1 in the hydrolysis of amino acid-conjugated fatty acids such as N-fatty acyl glycine and N-fatty acyl-L-serine, thereby acting as a physiological regulator of specific subsets of intracellular, but not of extracellular, N-fatty acyl amino acids. This chain is Fatty-acid amide hydrolase 1 (FAAH), found in Homo sapiens (Human).